A 255-amino-acid polypeptide reads, in one-letter code: uncharacterized protein (255 aa).

The first 23 residues, 1–23 (MKRLNKLVLGIIFLFLVISITAG), serve as a signal peptide directing secretion. Cysteine 24 carries N-palmitoyl cysteine lipidation. Residue cysteine 24 is the site of S-diacylglycerol cysteine attachment.

Belongs to the staphylococcal tandem lipoprotein family.

Its subcellular location is the cell membrane. This is an uncharacterized protein from Staphylococcus aureus (strain Mu50 / ATCC 700699).